A 260-amino-acid chain; its full sequence is MTILDEIVDYKRNLIKEGYYEEKLKTLNEVDITHKSSFKSQLDESNQLAVIAEIKSKSPTLDQLPNRDLAQQVKDYEANGANAVSILTDEHYFGGSYERLQDLTLQTTLPVLCKDFVVDKIQIDVAKKAGASIILLIVNVLTDQQMKDLYQYATSLNLEVLVEVHDKEELERAYKLKPQIIGVNNRDLKRFVTDVLHTNEILENKKEGYYYISESGIRDEQDVANVVESGIDGLLIGESLMKCEDLSQFLPGLKLTKVTK.

Belongs to the TrpC family.

The enzyme catalyses 1-(2-carboxyphenylamino)-1-deoxy-D-ribulose 5-phosphate + H(+) = (1S,2R)-1-C-(indol-3-yl)glycerol 3-phosphate + CO2 + H2O. It participates in amino-acid biosynthesis; L-tryptophan biosynthesis; L-tryptophan from chorismate: step 4/5. In Staphylococcus saprophyticus subsp. saprophyticus (strain ATCC 15305 / DSM 20229 / NCIMB 8711 / NCTC 7292 / S-41), this protein is Indole-3-glycerol phosphate synthase.